The chain runs to 218 residues: Deoxyribose-phosphate aldolase (218 aa).

The Proton donor/acceptor role is filled by Asp-92. Lys-156 functions as the Schiff-base intermediate with acetaldehyde in the catalytic mechanism. Catalysis depends on Lys-185, which acts as the Proton donor/acceptor.

The protein belongs to the DeoC/FbaB aldolase family. DeoC type 1 subfamily.

The protein resides in the cytoplasm. The catalysed reaction is 2-deoxy-D-ribose 5-phosphate = D-glyceraldehyde 3-phosphate + acetaldehyde. Its pathway is carbohydrate degradation; 2-deoxy-D-ribose 1-phosphate degradation; D-glyceraldehyde 3-phosphate and acetaldehyde from 2-deoxy-alpha-D-ribose 1-phosphate: step 2/2. Functionally, catalyzes a reversible aldol reaction between acetaldehyde and D-glyceraldehyde 3-phosphate to generate 2-deoxy-D-ribose 5-phosphate. The protein is Deoxyribose-phosphate aldolase of Desulfitobacterium hafniense (strain DSM 10664 / DCB-2).